The chain runs to 361 residues: dTDP-glucose 4,6-dehydratase (361 aa).

NAD(+) is bound by residues 11–12, 32–35, 58–59, 80–84, and T99; these read FI, DKLT, DI, and LAAES. Residue S84 coordinates substrate. Residue T133 participates in substrate binding. The active-site Proton donor is D134. Residues E135 and Y167 each act as proton acceptor in the active site. Residue 167–171 participates in NAD(+) binding; that stretch reads YSASK. Residue N196 coordinates substrate. N197 serves as a coordination point for NAD(+). Residues 206-207, 222-224, R231, N266, and 296-300 contribute to the substrate site; these read KL, PIY, and DRPGH.

It belongs to the NAD(P)-dependent epimerase/dehydratase family. dTDP-glucose dehydratase subfamily. In terms of assembly, homodimer. Requires NAD(+) as cofactor.

It catalyses the reaction dTDP-alpha-D-glucose = dTDP-4-dehydro-6-deoxy-alpha-D-glucose + H2O. It functions in the pathway carbohydrate biosynthesis; dTDP-L-rhamnose biosynthesis. It participates in bacterial outer membrane biogenesis; LPS O-antigen biosynthesis. Catalyzes the dehydration of dTDP-D-glucose to form dTDP-6-deoxy-D-xylo-4-hexulose via a three-step process involving oxidation, dehydration and reduction. The chain is dTDP-glucose 4,6-dehydratase (rfbB) from Escherichia coli.